The chain runs to 667 residues: Protein adenylyltransferase SelO, mitochondrial (667 aa).

Residues 1–6 constitute a mitochondrion transit peptide; sequence MASVRA. 7 residues coordinate ATP: Gly154, Gly156, Lys177, Asp189, Gly190, Arg247, and Arg254. Catalysis depends on Asp341, which acts as the Proton acceptor. Residues Asn342 and Asp351 each coordinate Mg(2+). Asp351 serves as a coordination point for ATP. The segment at 628–652 is disordered; the sequence is YHSEEEATGPEAVARSTEEQSSYSN. Thr635 is subject to Phosphothreonine. Ser651 carries the phosphoserine modification. Sec665 is a non-standard amino acid (selenocysteine).

This sequence belongs to the SELO family. It depends on Mg(2+) as a cofactor.

Its subcellular location is the mitochondrion. It carries out the reaction L-tyrosyl-[protein] + ATP = O-(5'-adenylyl)-L-tyrosyl-[protein] + diphosphate. It catalyses the reaction L-threonyl-[protein] + ATP = 3-O-(5'-adenylyl)-L-threonyl-[protein] + diphosphate. The catalysed reaction is L-seryl-[protein] + ATP = 3-O-(5'-adenylyl)-L-seryl-[protein] + diphosphate. Functionally, catalyzes the transfer of adenosine 5'-monophosphate (AMP) to Ser, Thr and Tyr residues of target proteins (AMPylation). May be a redox-active mitochondrial selenoprotein which interacts with a redox target protein. In Mus musculus (Mouse), this protein is Protein adenylyltransferase SelO, mitochondrial.